Here is a 156-residue protein sequence, read N- to C-terminus: Small ribosomal subunit protein uS7 (156 aa).

Belongs to the universal ribosomal protein uS7 family. As to quaternary structure, part of the 30S ribosomal subunit. Contacts proteins S9 and S11.

One of the primary rRNA binding proteins, it binds directly to 16S rRNA where it nucleates assembly of the head domain of the 30S subunit. Is located at the subunit interface close to the decoding center, probably blocks exit of the E-site tRNA. The sequence is that of Small ribosomal subunit protein uS7 from Shigella dysenteriae serotype 1 (strain Sd197).